A 607-amino-acid chain; its full sequence is ATP-dependent rRNA helicase SPB4 (607 aa).

The short motif at 7-35 is the Q motif element; that stretch reads WDDLEYPIQPWIRSAVDVMGFENMTPVQA. In terms of domain architecture, Helicase ATP-binding spans 38–224; it reads IPLFARNKDV…KTGLRNPVKV (187 aa). An ATP-binding site is contributed by 51–58; the sequence is SVTGSGKT. Positions 172-175 match the DEAD box motif; the sequence is DEAD. The Helicase C-terminal domain maps to 248–404; the sequence is KLEQVISIIN…EISLDIVNLP (157 aa). A disordered region spans residues 527–607; sequence KSELKKKNMS…NGMQGSFDDL (81 aa). A coiled-coil region spans residues 529-565; it reads ELKKKNMSWSNNTQSKEEKVERRTKMALKRKRIEEEL. 2 stretches are compositionally biased toward basic and acidic residues: residues 543-552 and 560-570; these read SKEEKVERRT and RIEEELSKEAD. Over residues 587-601 the composition is skewed to polar residues; it reads ILQNKKSKNSNNGMQ.

The protein belongs to the DEAD box helicase family. DDX55/SPB4 subfamily. Component of pre-60S ribosomal complexes.

Its subcellular location is the nucleus. The protein localises to the nucleolus. The catalysed reaction is ATP + H2O = ADP + phosphate + H(+). Its function is as follows. ATP-binding RNA helicase involved in the biogenesis of 60S ribosomal subunits. Binds 90S pre-ribosomal particles and dissociates from pre-60S ribosomal particles after processing of 27SB pre-rRNA. Required for the normal formation of 18S rRNA through the processing of pre-rRNAs at sites A0, A1 and A2, and the normal formation of 25S and 5.8S rRNAs through the processing of pre-rRNAs at sites C1 and C2. The chain is ATP-dependent rRNA helicase SPB4 from Vanderwaltozyma polyspora (strain ATCC 22028 / DSM 70294 / BCRC 21397 / CBS 2163 / NBRC 10782 / NRRL Y-8283 / UCD 57-17) (Kluyveromyces polysporus).